The primary structure comprises 341 residues: N-acetyl-gamma-glutamyl-phosphate reductase (341 aa).

The active site involves Cys163.

Belongs to the NAGSA dehydrogenase family. Type 1 subfamily.

It is found in the cytoplasm. It catalyses the reaction N-acetyl-L-glutamate 5-semialdehyde + phosphate + NADP(+) = N-acetyl-L-glutamyl 5-phosphate + NADPH + H(+). It functions in the pathway amino-acid biosynthesis; L-arginine biosynthesis; N(2)-acetyl-L-ornithine from L-glutamate: step 3/4. Its function is as follows. Catalyzes the NADPH-dependent reduction of N-acetyl-5-glutamyl phosphate to yield N-acetyl-L-glutamate 5-semialdehyde. This Idiomarina loihiensis (strain ATCC BAA-735 / DSM 15497 / L2-TR) protein is N-acetyl-gamma-glutamyl-phosphate reductase.